The chain runs to 935 residues: Dual 3',5'-cyclic-AMP and -GMP phosphodiesterase 11A (935 aa).

Residues 41–125 (RHSSGQGASD…ASQKELRKSF (85 aa)) form a disordered region. Residues 54–69 (ALAGASSLAQSSARGS) show a composition bias toward low complexity. 3 positions are modified to phosphoserine: S162, S163, and S239. GAF domains are found at residues 217–370 (DLTS…GIAI) and 402–558 (DLEK…GLGI). S424 contributes to the 3',5'-cyclic GMP binding site. A PDEase domain is found at 588-912 (SKAEVDKFKA…RKWEELHQKR (325 aa)). The active-site Proton donor is the H664. A divalent metal cation contacts are provided by H668, H704, D705, and D816. The segment at 915–935 (VSAASPVPSSPSPAVAGEDRL) is disordered.

The protein belongs to the cyclic nucleotide phosphodiesterase family. A divalent metal cation serves as cofactor. Isoform 1 is expressed in brain, heart, kidney and liver, but not in prostate. Isoform 2 is specifically expressed in testis. Isoform 3 is expressed in various tissues including brain, lung, skeletal muscle, spleen, testis and prostate.

The protein resides in the cytoplasm. It is found in the cytosol. It carries out the reaction 3',5'-cyclic GMP + H2O = GMP + H(+). The enzyme catalyses 3',5'-cyclic AMP + H2O = AMP + H(+). Its activity is regulated as follows. Inhibited by 3-isobutyl-1-methylxanthine (IBMX), zaprinast and dipyridamole. cGMP acts as an allosteric activator. Plays a role in signal transduction by regulating the intracellular concentration of cyclic nucleotides cAMP and cGMP. Catalyzes the hydrolysis of both cAMP and cGMP to 5'-AMP and 5'-GMP, respectively. This chain is Dual 3',5'-cyclic-AMP and -GMP phosphodiesterase 11A, found in Rattus norvegicus (Rat).